The sequence spans 889 residues: DNA mismatch repair protein MutS (889 aa).

An ATP-binding site is contributed by 622 to 629 (GPNMAGKS). Residues 869–889 (QRVKRPEKAPADVTAETEDQE) form a disordered region.

This sequence belongs to the DNA mismatch repair MutS family.

Functionally, this protein is involved in the repair of mismatches in DNA. It is possible that it carries out the mismatch recognition step. This protein has a weak ATPase activity. This chain is DNA mismatch repair protein MutS, found in Desulfatibacillum aliphaticivorans.